A 331-amino-acid chain; its full sequence is UPF0194 membrane protein YbhG (331 aa).

The first 19 residues, 1–19 (MKKPVVIGLAIAAIVAVIA), serve as a signal peptide directing secretion. The stretch at 107–208 (EEIAQAAAAV…LDLQDTTLIA (102 aa)) forms a coiled coil.

It belongs to the UPF0194 family.

It is found in the periplasm. This chain is UPF0194 membrane protein YbhG, found in Salmonella agona (strain SL483).